A 509-amino-acid polypeptide reads, in one-letter code: Maturase K (509 aa).

The protein belongs to the intron maturase 2 family. MatK subfamily.

Its subcellular location is the plastid. Its function is as follows. Usually encoded in the trnK tRNA gene intron. Probably assists in splicing its own and other chloroplast group II introns. This is Maturase K from Castilleja linariifolia (Wyoming Indian paintbrush).